The chain runs to 159 residues: NADH-quinone oxidoreductase subunit B (159 aa).

Residues Cys-36, Cys-37, Cys-102, and Cys-132 each contribute to the [4Fe-4S] cluster site.

The protein belongs to the complex I 20 kDa subunit family. As to quaternary structure, NDH-1 is composed of 14 different subunits. Subunits NuoB, C, D, E, F, and G constitute the peripheral sector of the complex. [4Fe-4S] cluster is required as a cofactor.

The protein localises to the cell inner membrane. The enzyme catalyses a quinone + NADH + 5 H(+)(in) = a quinol + NAD(+) + 4 H(+)(out). NDH-1 shuttles electrons from NADH, via FMN and iron-sulfur (Fe-S) centers, to quinones in the respiratory chain. Couples the redox reaction to proton translocation (for every two electrons transferred, four hydrogen ions are translocated across the cytoplasmic membrane), and thus conserves the redox energy in a proton gradient. This Paracidovorax citrulli (strain AAC00-1) (Acidovorax citrulli) protein is NADH-quinone oxidoreductase subunit B.